We begin with the raw amino-acid sequence, 778 residues long: Endonuclease MutS2 (778 aa).

328–335 lines the ATP pocket; sequence GPNTGGKT. Positions 702-777 constitute a Smr domain; it reads LDLRGKRYEE…GSGATIVTFK (76 aa).

Belongs to the DNA mismatch repair MutS family. MutS2 subfamily. As to quaternary structure, homodimer. Binds to stalled ribosomes, contacting rRNA.

Endonuclease that is involved in the suppression of homologous recombination and thus may have a key role in the control of bacterial genetic diversity. In terms of biological role, acts as a ribosome collision sensor, splitting the ribosome into its 2 subunits. Detects stalled/collided 70S ribosomes which it binds and splits by an ATP-hydrolysis driven conformational change. Acts upstream of the ribosome quality control system (RQC), a ribosome-associated complex that mediates the extraction of incompletely synthesized nascent chains from stalled ribosomes and their subsequent degradation. Probably generates substrates for RQC. The polypeptide is Endonuclease MutS2 (Streptococcus pneumoniae (strain Taiwan19F-14)).